The chain runs to 275 residues: Putative methylglyoxal reductase DkgA (275 aa).

The active-site Proton donor is the Y51. H107 serves as a coordination point for substrate. 187-241 (SPLAQGGEGVFDQKVIRELADKYGKTPAQIVIRWHLDCGLVVIPKSVTPSRIAEN) contacts NADP(+).

Belongs to the aldo/keto reductase family. Monomer.

It localises to the cytoplasm. It carries out the reaction hydroxyacetone + NADP(+) = methylglyoxal + NADPH + H(+). In terms of biological role, aldo-keto reductase that significantly contributes to cellular methylglyoxal detoxification by catalyzing the NADPH-dependent conversion of methylglyoxal to acetol. The sequence is that of Putative methylglyoxal reductase DkgA from Salmonella typhi.